Here is a 388-residue protein sequence, read N- to C-terminus: Succinate--CoA ligase [ADP-forming] subunit beta (388 aa).

Residues K46, 53 to 55, E99, C102, and E107 contribute to the ATP site; that span reads GRG. 2 residues coordinate Mg(2+): N199 and D213. Substrate-binding positions include N264 and 321 to 323; that span reads GIV.

The protein belongs to the succinate/malate CoA ligase beta subunit family. In terms of assembly, heterotetramer of two alpha and two beta subunits. Mg(2+) serves as cofactor.

The enzyme catalyses succinate + ATP + CoA = succinyl-CoA + ADP + phosphate. It catalyses the reaction GTP + succinate + CoA = succinyl-CoA + GDP + phosphate. It functions in the pathway carbohydrate metabolism; tricarboxylic acid cycle; succinate from succinyl-CoA (ligase route): step 1/1. Its function is as follows. Succinyl-CoA synthetase functions in the citric acid cycle (TCA), coupling the hydrolysis of succinyl-CoA to the synthesis of either ATP or GTP and thus represents the only step of substrate-level phosphorylation in the TCA. The beta subunit provides nucleotide specificity of the enzyme and binds the substrate succinate, while the binding sites for coenzyme A and phosphate are found in the alpha subunit. The sequence is that of Succinate--CoA ligase [ADP-forming] subunit beta from Actinobacillus pleuropneumoniae serotype 3 (strain JL03).